Reading from the N-terminus, the 524-residue chain is Gamma-taxilin (524 aa).

A compositionally biased stretch (basic and acidic residues) spans 1–10 (MATRLEEVTR). Disordered regions lie at residues 1–37 (MATR…KFEI) and 64–86 (LQHQ…DEGS). 2 positions are modified to omega-N-methylarginine: Arg-12 and Arg-24. Ser-79, Ser-86, and Ser-97 each carry phosphoserine. The span at 106 to 115 (REEIPGREAR) shows a compositional bias: basic and acidic residues. The disordered stretch occupies residues 106 to 130 (REEIPGREARTGPPDGQQDSECSRN). A coiled-coil region spans residues 153-465 (EEKLAALCKK…KEQVSIKAAD (313 aa)). Tyr-283 is subject to Phosphotyrosine. The tract at residues 501-524 (VCEKSAAQKPSSSGSPAQGIESVD) is disordered. Ser-512 is modified (phosphoserine).

Belongs to the taxilin family. Binds to the C-terminal coiled coil region of syntaxin family members STX1A, STX3A and STX4A. Forms a heterodimer with ATF4 in osteoblasts.

Its subcellular location is the nucleus membrane. It localises to the cytoplasm. The protein localises to the cytosol. In terms of biological role, may be involved in intracellular vesicle traffic. Inhibits ATF4-mediated transcription, possibly by dimerizing with ATF4 to form inactive dimers that cannot bind DNA. May be involved in regulating bone mass density through an ATF4-dependent pathway. May be involved in cell cycle progression. This is Gamma-taxilin (Txlng) from Mus musculus (Mouse).